Reading from the N-terminus, the 349-residue chain is Phosphoribosylformylglycinamidine cyclo-ligase (349 aa).

Belongs to the AIR synthase family.

Its subcellular location is the cytoplasm. It carries out the reaction 2-formamido-N(1)-(5-O-phospho-beta-D-ribosyl)acetamidine + ATP = 5-amino-1-(5-phospho-beta-D-ribosyl)imidazole + ADP + phosphate + H(+). It participates in purine metabolism; IMP biosynthesis via de novo pathway; 5-amino-1-(5-phospho-D-ribosyl)imidazole from N(2)-formyl-N(1)-(5-phospho-D-ribosyl)glycinamide: step 2/2. In Methanococcus maripaludis (strain C5 / ATCC BAA-1333), this protein is Phosphoribosylformylglycinamidine cyclo-ligase.